The following is a 217-amino-acid chain: Salivary glue protein Sgs-3 (217 aa).

The signal sequence occupies residues 1–23 (MKLTIATVLASILLIGFANVANC). Residues 45–130 (KSTSTTTTTT…KPTTHSTPKT (86 aa)) show a composition bias toward low complexity. The tract at residues 45-163 (KSTSTTTTTT…KHTTPTTTTT (119 aa)) is disordered. The span at 131-154 (KPTKHTTPKTKPTKHTTPKTKPTK) shows a compositional bias: basic residues.

The chain is Salivary glue protein Sgs-3 (Sgs3) from Drosophila simulans (Fruit fly).